A 160-amino-acid polypeptide reads, in one-letter code: MAKKKNKAGDNTIALNKRARHDYFIEEEIEAGLSLQGWEVKSMRAGKANISDSYVIFNNGEAFLFGATIQPLSVASTHVVCDPTRTRKLLLNERELASLFGKANRDGYTLVALSLYWKNAWAKLKIGLAKGKKQHDKREDIKDREWKVQKDRIMKNAHRG.

This sequence belongs to the SmpB family.

Its subcellular location is the cytoplasm. Functionally, required for rescue of stalled ribosomes mediated by trans-translation. Binds to transfer-messenger RNA (tmRNA), required for stable association of tmRNA with ribosomes. tmRNA and SmpB together mimic tRNA shape, replacing the anticodon stem-loop with SmpB. tmRNA is encoded by the ssrA gene; the 2 termini fold to resemble tRNA(Ala) and it encodes a 'tag peptide', a short internal open reading frame. During trans-translation Ala-aminoacylated tmRNA acts like a tRNA, entering the A-site of stalled ribosomes, displacing the stalled mRNA. The ribosome then switches to translate the ORF on the tmRNA; the nascent peptide is terminated with the 'tag peptide' encoded by the tmRNA and targeted for degradation. The ribosome is freed to recommence translation, which seems to be the essential function of trans-translation. This is SsrA-binding protein from Actinobacillus succinogenes (strain ATCC 55618 / DSM 22257 / CCUG 43843 / 130Z).